A 942-amino-acid chain; its full sequence is MRISIGRIAWQILAVLIAVAFTIEHDSICDESIGACGEPIHTVIRLAKRDDELARRIAADHDMHVKGDPFLDTHYFLYHSETTRTRRHKRAIVERLDSHPAVEWVEEQRPKKRVKRDYILLDNDVHHSNPFRRSVLNRDGTRRAQRQQPQSPREIPSLPFPDPLYKDQWYLHGGAVGGYDMNVRQAWLQGYAGRNVSVSILDDGIQRDHPDLAANYDPLASTDINDHDDDPTPQNNGDNKHGTRCAGEVAALAGNNQCGVGVAFKAKIGGVRMLDGAVSDSVEAASLSLNQDHIDIYSASWGPEDDGKTFDGPGPLAREAFYRGIKNGRGGKGNIFVWASGNGGSRQDSCSADGYTTSVYTLSISSATYDNHRPWYLEECPSSIATTYSSADFRQPAIVTVDVPGGCTDKHTGTSASAPLAAGIIALALEANPELTWRDMQHLVLRTANWKPLENNPGWSRNGVGRMVSNKFGYGLIDGGALVNMAKTWKTVPEQHICTYEYRLANPNPRPIVGRFQLNFTLDVNGCESGTPVLYLEHVQVHATVRYLKRGDLKLTLFSPSGTRSVLLPPRPQDFNANGFHKWPFLSVQQWGEDPRGTWLLMVESVTTNPAATGTFHDWTLLLYGTADPAQSGDPVYSATPATSQGVLSRVHQLTSQVEESAPISFPDLTSAGNCHDECNGGCTESSSATSCFACKHLTQTLRNKGGSGFKCVQKCDDTYYLDGDKCKMCSSHCHTCTKAEVCETCPGSLLLIDVDNMPHYDHGKCVESCPPGLVADYESNLVQAKCIWRKDLCGDGYYINAVGKCDLCDSSCETCTAPGPMSCEKCSKGYGKGSIGYCRPCCPEGSTKSWQCEDCSKPDPTLLIDSNKSSGFGLMFWIVVSLIAACGICACKKCASETKSSNVEYAPLAQYNATNGAINLGAHTDDEDDDEDEVFVNPQIV.

A signal peptide spans 1–22 (MRISIGRIAWQILAVLIAVAFT). A propeptide spanning residues 23–116 (IEHDSICDES…EQRPKKRVKR (94 aa)) is cleaved from the precursor. Residues 117–871 (DYILLDNDVH…TLLIDSNKSS (755 aa)) lie on the Lumenal side of the membrane. D124 is a Ca(2+) binding site. Residues 130-160 (PFRRSVLNRDGTRRAQRQQPQSPREIPSLPF) form a disordered region. The Peptidase S8 domain occupies 168–483 (QWYLHGGAVG…YGLIDGGALV (316 aa)). N-linked (GlcNAc...) asparagine glycosylation is present at N195. The Charge relay system role is filled by D202. Position 203 (D203) interacts with substrate. Residues D211, D223, D228, and D230 each coordinate Ca(2+). Positions 211-242 (DLAANYDPLASTDINDHDDDPTPQNNGDNKHG) are disordered. 238 to 239 (DN) is a binding site for substrate. The Charge relay system role is filled by H241. Ca(2+) contacts are provided by L252, N255, Q257, and G259. 2 disulfide bridges follow: C258/C407 and C350/C380. Residues E283, 300 to 305 (SWGPED), D311, and 339 to 342 (ASGN) each bind substrate. D305 is a Ca(2+) binding site. D348 lines the Ca(2+) pocket. Substrate contacts are provided by D353 and Y355. E378 is a binding site for Ca(2+). S415 serves as the catalytic Charge relay system. S415 contacts substrate. Positions 491–629 (TVPEQHICTY…TLLLYGTADP (139 aa)) constitute a P/Homo B domain. Cysteines 498 and 527 form a disulfide. An N-linked (GlcNAc...) asparagine glycan is attached at N519. 3 FU repeats span residues 674–723 (NCHD…YYLD), 725–777 (DKCK…LVAD), and 804–850 (GKCD…STKS). The N-linked (GlcNAc...) asparagine glycan is linked to N868. A helical transmembrane segment spans residues 872–892 (GFGLMFWIVVSLIAACGICAC). At 893–942 (KKCASETKSSNVEYAPLAQYNATNGAINLGAHTDDEDDDEDEVFVNPQIV) the chain is on the cytoplasmic side. A disordered region spans residues 922–942 (GAHTDDEDDDEDEVFVNPQIV). The span at 926–935 (DDEDDDEDEV) shows a compositional bias: acidic residues.

It belongs to the peptidase S8 family. Furin subfamily. Requires Ca(2+) as cofactor. In terms of tissue distribution, in larvae and adults, expressed in all hypodermal cells, vulva and ventral nerve cords. Most highly expressed isoform in the embryonic epidermis. As to expression, expressed primarily in the germline. In terms of tissue distribution, expressed primarily in pharyngeal epithelial cells.

The protein resides in the membrane. Serine endoprotease which cleaves proproteins at paired basic amino acids at the consensus RX(K/R)R motif. Involved in N-terminal processing of cuticle collagens and plays a role in cuticle biosynthesis. May cleave both sqt-3 and dpy-17 collagens to promote their secretion. Acts in ASEL sensory neurons to regulate high salt chemotaxis responses probably by cleaving insulin-like protein ins-6 into its mature and active form. Essential for embryonic and larval development. Its function is as follows. Involved in cuticle biosynthesis but dispensable for larval development. This is Endoprotease bli-4 (bli-4) from Caenorhabditis elegans.